The chain runs to 344 residues: L-rhamnose-proton symporter (344 aa).

The next 10 helical transmembrane spans lie at 4–24 (AITM…CFYA), 38–58 (WSVG…ALLL), 68–88 (FSLS…IGNI), 101–121 (MGIG…TPII), 137–157 (TLLG…AGQL), 175–195 (LVLA…MNAA), 214–234 (LPSY…FCFI), 259–279 (VLLS…YAWG), 290–310 (ISWM…GLVL), and 323–343 (VLSL…MGMA).

The protein belongs to the L-rhamnose transporter (TC 2.A.7.6) family.

Its subcellular location is the cell inner membrane. It carries out the reaction L-rhamnopyranose(in) + H(+)(in) = L-rhamnopyranose(out) + H(+)(out). Its function is as follows. Uptake of L-rhamnose across the cytoplasmic membrane with the concomitant transport of protons into the cell (symport system). The sequence is that of L-rhamnose-proton symporter from Escherichia coli O157:H7.